The following is a 307-amino-acid chain: 1D-myo-inositol 2-acetamido-2-deoxy-alpha-D-glucopyranoside deacetylase 1 (307 aa).

Residues H21, D24, and H157 each coordinate Zn(2+).

Belongs to the MshB deacetylase family. Zn(2+) serves as cofactor.

It carries out the reaction 1D-myo-inositol 2-acetamido-2-deoxy-alpha-D-glucopyranoside + H2O = 1D-myo-inositol 2-amino-2-deoxy-alpha-D-glucopyranoside + acetate. Catalyzes the deacetylation of 1D-myo-inositol 2-acetamido-2-deoxy-alpha-D-glucopyranoside (GlcNAc-Ins) in the mycothiol biosynthesis pathway. In Frankia casuarinae (strain DSM 45818 / CECT 9043 / HFP020203 / CcI3), this protein is 1D-myo-inositol 2-acetamido-2-deoxy-alpha-D-glucopyranoside deacetylase 1.